Consider the following 551-residue polypeptide: Endolytic murein transglycosylase (551 aa).

Residues M1–K187 lie on the Cytoplasmic side of the membrane. The tract at residues V38–K180 is disordered. Low complexity-rich tracts occupy residues P100–R110 and Q145–T157. Residues D159–K174 show a composition bias toward basic and acidic residues. A helical transmembrane segment spans residues A188–Y208. The Extracellular segment spans residues Q209–N551.

It belongs to the transglycosylase MltG family. As to quaternary structure, interacts with RodZ. Interacts with MreC in the elongasome; interaction is strongly reduced when the 90 C-terminal residues of MreC are missing. Interacts with KhpB (also called EloR/Jag) via MltG's N-terminus, suggesting the N-terminus of MltG is cytoplasmic.

It localises to the cell membrane. The enzyme catalyses a peptidoglycan chain = a peptidoglycan chain with N-acetyl-1,6-anhydromuramyl-[peptide] at the reducing end + a peptidoglycan chain with N-acetylglucosamine at the non-reducing end.. Functions as a peptidoglycan terminase that cleaves nascent peptidoglycan strands endolytically to terminate their elongation. Functionally, mutations in this gene suppress deletion of PBP2b (penA); truncation at residue 168, undefined changes between residue Ile-447 and Ala-505, and mutation of Ala-505 suppress the penA deletion. Probably part of the elongasome which synthesizes peripheral peptidoglycan. The protein is Endolytic murein transglycosylase of Streptococcus pneumoniae (strain ATCC BAA-255 / R6).